Consider the following 310-residue polypeptide: tRNA dimethylallyltransferase (310 aa).

ATP is bound at residue 11–18; the sequence is GPTGVGKT. 13–18 serves as a coordination point for substrate; it reads TGVGKT.

It belongs to the IPP transferase family. In terms of assembly, monomer. Requires Mg(2+) as cofactor.

The catalysed reaction is adenosine(37) in tRNA + dimethylallyl diphosphate = N(6)-dimethylallyladenosine(37) in tRNA + diphosphate. In terms of biological role, catalyzes the transfer of a dimethylallyl group onto the adenine at position 37 in tRNAs that read codons beginning with uridine, leading to the formation of N6-(dimethylallyl)adenosine (i(6)A). This chain is tRNA dimethylallyltransferase, found in Latilactobacillus sakei subsp. sakei (strain 23K) (Lactobacillus sakei subsp. sakei).